Here is a 230-residue protein sequence, read N- to C-terminus: 7-cyano-7-deazaguanine synthase (230 aa).

Residue 16–26 (LSGGLDSMVSG) participates in ATP binding. Residues Cys-195, Cys-205, Cys-208, and Cys-211 each coordinate Zn(2+).

It belongs to the QueC family. Requires Zn(2+) as cofactor.

It catalyses the reaction 7-carboxy-7-deazaguanine + NH4(+) + ATP = 7-cyano-7-deazaguanine + ADP + phosphate + H2O + H(+). It participates in purine metabolism; 7-cyano-7-deazaguanine biosynthesis. In terms of biological role, catalyzes the ATP-dependent conversion of 7-carboxy-7-deazaguanine (CDG) to 7-cyano-7-deazaguanine (preQ(0)). The polypeptide is 7-cyano-7-deazaguanine synthase (Rhizorhabdus wittichii (strain DSM 6014 / CCUG 31198 / JCM 15750 / NBRC 105917 / EY 4224 / RW1) (Sphingomonas wittichii)).